A 396-amino-acid polypeptide reads, in one-letter code: Elongation factor Tu (396 aa).

Residues 10 to 206 form the tr-type G domain; that stretch reads KPHVNVGTIG…ALDASIPEPK (197 aa). Residues 19–26 are G1; that stretch reads GHVDHGKT. GTP is bound at residue 19–26; the sequence is GHVDHGKT. T26 is a Mg(2+) binding site. Residues 60–64 are G2; sequence GITIS. The interval 81–84 is G3; it reads DCPG. GTP contacts are provided by residues 81–85 and 136–139; these read DCPGH and NKAD. The tract at residues 136 to 139 is G4; it reads NKAD. A G5 region spans residues 174–176; the sequence is SAL.

It belongs to the TRAFAC class translation factor GTPase superfamily. Classic translation factor GTPase family. EF-Tu/EF-1A subfamily. Monomer.

It localises to the cytoplasm. It carries out the reaction GTP + H2O = GDP + phosphate + H(+). GTP hydrolase that promotes the GTP-dependent binding of aminoacyl-tRNA to the A-site of ribosomes during protein biosynthesis. In Dichelobacter nodosus (strain VCS1703A), this protein is Elongation factor Tu.